We begin with the raw amino-acid sequence, 435 residues long: Chromatin structure-remodeling complex subunit RSC7 (435 aa).

Positions 1–97 (MSDSEGGLAS…DKGVTRSRNR (97 aa)) are disordered. Residues 30–66 (DTEDLDIDENDENEDDDYREEEANEGVNEEEISDEEE) show a composition bias toward acidic residues. The residue at position 86 (S86) is a Phosphoserine. The interval 248–435 (ELRTKGNVIE…QNFEKCNEYI (188 aa)) is functional region; able to complement all NPL6 null allele phenotypes.

It belongs to the RSC7/SWP82 family. RSC7 subfamily. Interacts with ARP7, ARP9, RSC3, RSC8, RSC30 and STH1. Component of the two forms of the RSC complex composed of at least either RSC1 or RSC2, and ARP7, ARP9, LDB7, NPL6, RSC3, RSC30, RSC4, RSC58, RSC6, RSC8, RSC9, SFH1, STH1, HTL1 and probably RTT102. The complexes interact with histone and histone variant components of centromeric chromatin. Component of a fungal-specific module (HTL1-LDB7-NPL6-RSC3-RSC30) within the RSC complex.

The protein localises to the nucleus. Its function is as follows. Component of the chromatin structure remodeling complex (RSC), which is involved in transcription regulation and nucleosome positioning. RSC is responsible for the transfer of a histone octamer from a nucleosome core particle to naked DNA. The reaction requires ATP and involves an activated RSC-nucleosome intermediate. Remodeling reaction also involves DNA translocation, DNA twist and conformational change. As a reconfigurer of centromeric and flanking nucleosomes, RSC complex is required both for proper kinetochore function in chromosome segregation and, via a PKC1-dependent signaling pathway, for organization of the cellular cytoskeleton. Together with HTL1, LDB7, RSC3, RSC30 components, defines a fungal-specific module within the RSC complex that plays a role in many cellular functions including the maintenance of cell wall integrity. Acidic protein important for nuclear protein localization. The chain is Chromatin structure-remodeling complex subunit RSC7 (NPL6) from Saccharomyces cerevisiae (strain ATCC 204508 / S288c) (Baker's yeast).